Consider the following 193-residue polypeptide: Ancillary SecYEG translocon subunit (193 aa).

Residues 1-11 (MIKNSYINEKL) are Cytoplasmic-facing. The chain crosses the membrane as a helical span at residues 12–34 (NFYQKSFLTCMLLIVIVIVYFFS). At 35–193 (KNYLDKPKNS…IIQMKINNYN (159 aa)) the chain is on the extracellular side.

Belongs to the YfgM family. In terms of assembly, interacts with the Sec translocon. Forms a complex with PpiD.

It localises to the cell membrane. May mediate protein transfer from the Sec translocon to the chaperone network via its extracellular C-terminal region. The polypeptide is Ancillary SecYEG translocon subunit (Buchnera aphidicola subsp. Baizongia pistaciae (strain Bp)).